A 358-amino-acid polypeptide reads, in one-letter code: Phosphoserine aminotransferase (358 aa).

Arg41 contacts L-glutamate. Residues 75 to 76 (AS), Trp100, Thr148, Asp167, and Gln190 each bind pyridoxal 5'-phosphate. Lys191 carries the post-translational modification N6-(pyridoxal phosphate)lysine. 233 to 234 (NT) is a pyridoxal 5'-phosphate binding site.

This sequence belongs to the class-V pyridoxal-phosphate-dependent aminotransferase family. SerC subfamily. Homodimer. Pyridoxal 5'-phosphate is required as a cofactor.

Its subcellular location is the cytoplasm. The catalysed reaction is O-phospho-L-serine + 2-oxoglutarate = 3-phosphooxypyruvate + L-glutamate. It carries out the reaction 4-(phosphooxy)-L-threonine + 2-oxoglutarate = (R)-3-hydroxy-2-oxo-4-phosphooxybutanoate + L-glutamate. It participates in amino-acid biosynthesis; L-serine biosynthesis; L-serine from 3-phospho-D-glycerate: step 2/3. Its pathway is cofactor biosynthesis; pyridoxine 5'-phosphate biosynthesis; pyridoxine 5'-phosphate from D-erythrose 4-phosphate: step 3/5. Its function is as follows. Catalyzes the reversible conversion of 3-phosphohydroxypyruvate to phosphoserine and of 3-hydroxy-2-oxo-4-phosphonooxybutanoate to phosphohydroxythreonine. The polypeptide is Phosphoserine aminotransferase (Campylobacter jejuni subsp. jejuni serotype O:2 (strain ATCC 700819 / NCTC 11168)).